The chain runs to 185 residues: Large ribosomal subunit protein bL12c (185 aa).

The N-terminal 47 residues, 1–47, are a transit peptide targeting the chloroplast; it reads MASTALSSAFSLLSLPSSSSPAAAAAAAPRSFAVPSRARPRRAVAVV.

It belongs to the bacterial ribosomal protein bL12 family.

It is found in the plastid. The protein localises to the chloroplast. This Oryza sativa subsp. japonica (Rice) protein is Large ribosomal subunit protein bL12c (RPL12-2).